A 333-amino-acid chain; its full sequence is Phosphate acyltransferase (333 aa).

It belongs to the PlsX family. Homodimer. Probably interacts with PlsY.

It is found in the cytoplasm. It catalyses the reaction a fatty acyl-[ACP] + phosphate = an acyl phosphate + holo-[ACP]. Its pathway is lipid metabolism; phospholipid metabolism. In terms of biological role, catalyzes the reversible formation of acyl-phosphate (acyl-PO(4)) from acyl-[acyl-carrier-protein] (acyl-ACP). This enzyme utilizes acyl-ACP as fatty acyl donor, but not acyl-CoA. The sequence is that of Phosphate acyltransferase from Thermosipho melanesiensis (strain DSM 12029 / CIP 104789 / BI429).